Here is a 35-residue protein sequence, read N- to C-terminus: Photosystem II reaction center protein T (35 aa).

The helical transmembrane segment at 3-23 (ALVYTFLLVSTLGIIFFAIFF) threads the bilayer.

This sequence belongs to the PsbT family. In terms of assembly, PSII is composed of 1 copy each of membrane proteins PsbA, PsbB, PsbC, PsbD, PsbE, PsbF, PsbH, PsbI, PsbJ, PsbK, PsbL, PsbM, PsbT, PsbY, PsbZ, Psb30/Ycf12, at least 3 peripheral proteins of the oxygen-evolving complex and a large number of cofactors. It forms dimeric complexes.

The protein resides in the plastid. The protein localises to the chloroplast thylakoid membrane. Found at the monomer-monomer interface of the photosystem II (PS II) dimer, plays a role in assembly and dimerization of PSII. PSII is a light-driven water plastoquinone oxidoreductase, using light energy to abstract electrons from H(2)O, generating a proton gradient subsequently used for ATP formation. The chain is Photosystem II reaction center protein T from Saururus cernuus (Lizard's tail).